Reading from the N-terminus, the 172-residue chain is uncharacterized protein (172 aa).

2 disordered regions span residues 1 to 39 and 90 to 112; these read MAKV…NSNN and DLNG…GSIN. Residues 98–110 are compositionally biased toward low complexity; the sequence is NDSNNDNSPSRGS.

This is an uncharacterized protein from Dictyostelium discoideum (Social amoeba).